The chain runs to 126 residues: Fluoride-specific ion channel FluC (126 aa).

4 helical membrane-spanning segments follow: residues 7–24 (LWVS…YFLS), 35–55 (FPWG…LFLV), 69–89 (LLIA…AYES), and 98–118 (WGLF…AVLG). Na(+)-binding residues include Gly77 and Thr80.

Belongs to the fluoride channel Fluc/FEX (TC 1.A.43) family.

The protein resides in the cell inner membrane. The catalysed reaction is fluoride(in) = fluoride(out). Na(+) is not transported, but it plays an essential structural role and its presence is essential for fluoride channel function. In terms of biological role, fluoride-specific ion channel. Important for reducing fluoride concentration in the cell, thus reducing its toxicity. The sequence is that of Fluoride-specific ion channel FluC from Koribacter versatilis (strain Ellin345).